Consider the following 98-residue polypeptide: MVKKAHSFRRKTRGKLSKHPRRRGLPPLTRFLQEFEVGQKVHIVIEPSYHKGMPDPRFHGRTGTVVGKRGDAYIVQITDGGKVKTFFIHPVHLRPQKG.

Residues 1 to 24 show a composition bias toward basic residues; that stretch reads MVKKAHSFRRKTRGKLSKHPRRRG. Residues 1–27 are disordered; it reads MVKKAHSFRRKTRGKLSKHPRRRGLPP.

This sequence belongs to the eukaryotic ribosomal protein eL21 family. As to quaternary structure, part of the 50S ribosomal subunit.

In Thermococcus kodakarensis (strain ATCC BAA-918 / JCM 12380 / KOD1) (Pyrococcus kodakaraensis (strain KOD1)), this protein is Large ribosomal subunit protein eL21.